The sequence spans 1431 residues: Zinc finger protein 687b (1431 aa).

Disordered stretches follow at residues 24-481 (KEAI…RPLK) and 504-538 (KGGA…TTAG). Over residues 61–73 (SPSPSTDSQSDPS) the composition is skewed to low complexity. The span at 103–122 (GFVSSGGSVHMSQSRGQPNG) shows a compositional bias: polar residues. Low complexity-rich tracts occupy residues 174–188 (MQLL…EMNL), 196–209 (APAN…AASP), and 217–248 (LLST…ASSP). Positions 249–267 (LATSLTEPFNGTPRLSSSA) are enriched in polar residues. The span at 311-324 (SQSPSIPPSTSISP) shows a compositional bias: low complexity. A compositionally biased stretch (polar residues) spans 342–359 (RAQQNWLSTAAQTGNGKS). Basic and acidic residues predominate over residues 361 to 377 (PQEERNPEHVIEERDSP). A compositionally biased stretch (low complexity) spans 385 to 410 (PKSSMPTSAVTKRSCSPAAASSPSAA). The span at 438-449 (DGGKGDTDKIEV) shows a compositional bias: basic and acidic residues. Gly residues predominate over residues 519 to 528 (QTGGRAGPVK). The segment at 674-692 (YRCLECGDSFALERSLARH) adopts a C2H2-type 1; degenerate zinc-finger fold. Positions 754 to 816 (TTPIGMLSPS…GPQSPQALMP (63 aa)) are disordered. Low complexity predominate over residues 760-775 (LSPSLSSPPLTSSTTP). Residues 781 to 802 (APSTSSPLKDSPSPGTASTQPS) are compositionally biased toward polar residues. The C2H2-type 2; degenerate zinc finger occupies 830–853 (FKCPECQAQFLSKAELVTHFQQIR). 4 consecutive C2H2-type zinc fingers follow at residues 919-942 (YRCS…QTAH), 947-970 (HKCP…TSQH), 982-1004 (YKCV…FDTH), and 1013-1036 (FKCP…KTAH). Residues 1041–1120 (VKAETPPTTS…QVSSPESGNM (80 aa)) form a disordered region. Residues 1043 to 1057 (AETPPTTSSPVSAPA) are compositionally biased toward low complexity. A compositionally biased stretch (polar residues) spans 1058–1075 (GNSTSKPKPATENNSDEL). Residues 1080-1111 (GEEEEEGEDEEGEQEGEEREDEEEEENEEEEQ) are compositionally biased toward acidic residues. A C2H2-type 7 zinc finger spans residues 1122-1145 (WRCKECKKRFPEREDYIDHMKNEH). Residues 1205–1227 (WHCSEGKRTFSSRLILEKHIRVR) form a C2H2-type 8; degenerate zinc finger. The segment at 1225–1310 (RVRHGIRSRQ…EEEDGTFRCT (86 aa)) is disordered. 2 consecutive C2H2-type zinc fingers follow at residues 1307–1329 (FRCT…IPVH) and 1337–1360 (QQCL…FITH). The segment at 1362–1392 (LRQGQHDRNASPGASPQYGSPSSPKAGEDGD) is disordered. The segment covering 1373 to 1384 (PGASPQYGSPSS) has biased composition (polar residues). The C2H2-type 11 zinc finger occupies 1395–1425 (VSCRVCGRRFDKASDLNTHFRTHGMAFITAH).

The protein belongs to the krueppel C2H2-type zinc-finger protein family. As to expression, widely expressed with highest levels in eye, spleen and ovary.

The protein resides in the nucleus. Functionally, may be involved in transcriptional regulation. The sequence is that of Zinc finger protein 687b (znf687b) from Danio rerio (Zebrafish).